The following is a 150-amino-acid chain: Large ribosomal subunit protein bL9 (150 aa).

The protein belongs to the bacterial ribosomal protein bL9 family.

In terms of biological role, binds to the 23S rRNA. In Streptococcus pyogenes serotype M2 (strain MGAS10270), this protein is Large ribosomal subunit protein bL9.